The primary structure comprises 220 residues: ATP-dependent Clp protease proteolytic subunit 1 (220 aa).

The Nucleophile role is filled by Ser118. His143 is an active-site residue.

The protein belongs to the peptidase S14 family. In terms of assembly, fourteen ClpP subunits assemble into 2 heptameric rings which stack back to back to give a disk-like structure with a central cavity, resembling the structure of eukaryotic proteasomes.

It is found in the cytoplasm. It carries out the reaction Hydrolysis of proteins to small peptides in the presence of ATP and magnesium. alpha-casein is the usual test substrate. In the absence of ATP, only oligopeptides shorter than five residues are hydrolyzed (such as succinyl-Leu-Tyr-|-NHMec, and Leu-Tyr-Leu-|-Tyr-Trp, in which cleavage of the -Tyr-|-Leu- and -Tyr-|-Trp bonds also occurs).. Functionally, cleaves peptides in various proteins in a process that requires ATP hydrolysis. Has a chymotrypsin-like activity. Plays a major role in the degradation of misfolded proteins. This is ATP-dependent Clp protease proteolytic subunit 1 from Rhodococcus jostii (strain RHA1).